The chain runs to 374 residues: MENFPTEYFLNTTVRLLEYIRYRDSNYTREERIENLHYAYNKAAHHFAQPRQQQLLKVDPKRLQASLQTIVGMVVYSWAKVSKECMADLSIHYTYTLVLDDSKDDPYPTMVNYFDDLQAGREQAHPWWALVNEHFPNVLRHFGPFCSLNLIRSTLDFFEGCWIEQYNFGGFPGSHDYPQFLRRMNGLGHCVGASLWPKEQFNERSLFLEITSAIAQMENWMVWVNDLMSFYKEFDDERDQISLVKNYVVSDEISLHEALEKLTQDTLHSSKQMVAVFSDKDPQVMDTIECFMHGYVTWHLCDRRYRLSEIYEKVKEEKTEDAQKFCKFYEQAANVGAVSPSEWAYPPVAQLANVRSKDVKEVQKPFLSSIELVE.

Residues D100, E164, N225, S229, E233, D239, and I241 each coordinate Mg(2+). Residues 100–104 (DDSKD) form an aspartate-rich domain region.

It belongs to the trichodiene synthase family. Mg(2+) is required as a cofactor. It depends on Mn(2+) as a cofactor.

It carries out the reaction (2E,6E)-farnesyl diphosphate = trichodiene + diphosphate. It participates in sesquiterpene biosynthesis; trichothecene biosynthesis. Its activity is regulated as follows. Benzyl triethylammonium cation (BTAC) acts as a competitive inhibitor of trichodiene synthase reaction in the presence of pyrophosphate (PPi). In terms of biological role, trichodiene synthase; part of the core gene cluster that mediates the biosynthesis of trichothecenes, a very large family of chemically related bicyclic sesquiterpene compounds acting as mycotoxins, including T2-toxin. The biosynthesis of trichothecenes begins with the cyclization of farnesyl diphosphate to trichodiene and is catalyzed by the trichodiene synthase TRI5. Trichodiene undergoes a series of oxygenations catalyzed by the cytochrome P450 monooxygenase TRI4. TRI4 controls the addition of four oxygens at C-2, C-3, C-11, and the C-12, C-13-epoxide to form the intermediate isotrichotriol. Isotrichotriol then undergoes a non-enzymatic isomerization and cyclization to form isotrichodermol. During this process, the oxygen at the C-2 position becomes the pyran ring oxygen and the hydroxyl group at C-11 is lost. More complex type A trichothecenes are built by modifying isotrichodermol through a series of paired hydroxylation and acetylation or acylation steps. Isotrichodermol is converted to isotrichodermin by the acetyltransferase TRI101. TRI101 encodes a C-3 transacetylase that acts as a self-protection or resistance factor during biosynthesis and that the presence of a free C-3 hydroxyl group is a key component of Fusarium trichothecene phytotoxicity. A second hydroxyl group is added to C-15 by the trichothecene C-15 hydroxylase TRI11, producing 15-decalonectrin, which is then acetylated by TRI3, producing calonectrin. A third hydroxyl group is added at C-4 by the cytochrome P450 monooxygenase TRI13, converting calonectrin to 3,15-diacetoxyspirpenol, which is subsequently acetylated by the acetyltransferase TRI7. A fourth hydroxyl group is added to C-8 by the cytochrome P450 monooxygenase TRI1, followed by the addition of an isovaleryl moiety by TRI16. Finally, the acetyl group is removed from the C-3 position by the trichothecene C-3 esterase TRI8 to produce T-2 toxin. The sequence is that of Trichodiene synthase from Fusarium sporotrichioides.